A 129-amino-acid chain; its full sequence is Ribosome-binding factor A (129 aa).

Belongs to the RbfA family. As to quaternary structure, monomer. Binds 30S ribosomal subunits, but not 50S ribosomal subunits or 70S ribosomes.

Its subcellular location is the cytoplasm. In terms of biological role, one of several proteins that assist in the late maturation steps of the functional core of the 30S ribosomal subunit. Associates with free 30S ribosomal subunits (but not with 30S subunits that are part of 70S ribosomes or polysomes). Required for efficient processing of 16S rRNA. May interact with the 5'-terminal helix region of 16S rRNA. In Thioalkalivibrio sulfidiphilus (strain HL-EbGR7), this protein is Ribosome-binding factor A.